We begin with the raw amino-acid sequence, 259 residues long: MPEPLVTVQSVSVTLGGNAVLSDVSLSLAPGRITTLIGPNGAGKSTLARLVLGLVQPDSNHGTVIRRKGLRVGYMPQHIKIDDSLPLTVDRFLWLAAPGPTASRRAALERAGVAHLRRRGVQQLSGGEMQRVLLARALLRKPDLLVLDEPAQGVDVAGQNALYGLLKTVRDELGCAILLISHDLHLVMAATDEVICLQRHVCCSGSPESVSRDPAYHELFGPGAGTPNLALYTHDHDHDHDLHGNATHSHDHNGPCNHD.

The ABC transporter domain maps to 6 to 223 (VTVQSVSVTL…PAYHELFGPG (218 aa)). Position 38-45 (38-45 (GPNGAGKS)) interacts with ATP. Residues 230-259 (ALYTHDHDHDHDLHGNATHSHDHNGPCNHD) form a disordered region. Positions 233–259 (THDHDHDHDLHGNATHSHDHNGPCNHD) are enriched in basic and acidic residues.

Belongs to the ABC transporter superfamily. Zinc importer (TC 3.A.1.15.5) family. In terms of assembly, the complex is composed of two ATP-binding proteins (ZnuC), two transmembrane proteins (ZnuB) and a solute-binding protein (ZnuA).

The protein localises to the cell inner membrane. It catalyses the reaction Zn(2+)(out) + ATP(in) + H2O(in) = Zn(2+)(in) + ADP(in) + phosphate(in) + H(+)(in). Its function is as follows. Part of the ABC transporter complex ZnuABC involved in zinc import. Responsible for energy coupling to the transport system. In Alcanivorax borkumensis (strain ATCC 700651 / DSM 11573 / NCIMB 13689 / SK2), this protein is Zinc import ATP-binding protein ZnuC.